We begin with the raw amino-acid sequence, 54 residues long: Preprotein translocase subunit SecG (54 aa).

Topologically, residues 1 to 31 are cytoplasmic; that stretch reads MSSGSNSGGLMSSAGLVRYFDSEDRDAIAID. Residues 32 to 53 traverse the membrane as a helical segment; sequence PKTVLAFCVLFGVFVQILSLTV. A topological domain (extracellular) is located at residue alanine 54.

This sequence belongs to the SEC61-beta family. In terms of assembly, component of the protein translocase complex. Heterotrimer consisting of alpha (SecY), beta (SecG) and gamma (SecE) subunits. Can form oligomers of the heterotrimer.

It is found in the cell membrane. Involved in protein export. The function of the beta subunit is unknown, but it may be involved in stabilization of the trimeric complex. The polypeptide is Preprotein translocase subunit SecG (Halorubrum lacusprofundi (strain ATCC 49239 / DSM 5036 / JCM 8891 / ACAM 34)).